A 561-amino-acid polypeptide reads, in one-letter code: Dihydroxy-acid dehydratase (561 aa).

Asp78 contributes to the Mg(2+) binding site. A [2Fe-2S] cluster-binding site is contributed by Cys119. Residues Asp120 and Lys121 each coordinate Mg(2+). An N6-carboxylysine modification is found at Lys121. Cys192 contributes to the [2Fe-2S] cluster binding site. Glu448 contributes to the Mg(2+) binding site. Ser474 functions as the Proton acceptor in the catalytic mechanism.

The protein belongs to the IlvD/Edd family. As to quaternary structure, homodimer. Requires [2Fe-2S] cluster as cofactor. Mg(2+) serves as cofactor.

The catalysed reaction is (2R)-2,3-dihydroxy-3-methylbutanoate = 3-methyl-2-oxobutanoate + H2O. It carries out the reaction (2R,3R)-2,3-dihydroxy-3-methylpentanoate = (S)-3-methyl-2-oxopentanoate + H2O. It functions in the pathway amino-acid biosynthesis; L-isoleucine biosynthesis; L-isoleucine from 2-oxobutanoate: step 3/4. Its pathway is amino-acid biosynthesis; L-valine biosynthesis; L-valine from pyruvate: step 3/4. Functionally, functions in the biosynthesis of branched-chain amino acids. Catalyzes the dehydration of (2R,3R)-2,3-dihydroxy-3-methylpentanoate (2,3-dihydroxy-3-methylvalerate) into 2-oxo-3-methylpentanoate (2-oxo-3-methylvalerate) and of (2R)-2,3-dihydroxy-3-methylbutanoate (2,3-dihydroxyisovalerate) into 2-oxo-3-methylbutanoate (2-oxoisovalerate), the penultimate precursor to L-isoleucine and L-valine, respectively. In Sulfurimonas denitrificans (strain ATCC 33889 / DSM 1251) (Thiomicrospira denitrificans (strain ATCC 33889 / DSM 1251)), this protein is Dihydroxy-acid dehydratase.